The chain runs to 483 residues: ATP synthase subunit beta (483 aa).

An ATP-binding site is contributed by 162–169 (GGAGVGKT).

This sequence belongs to the ATPase alpha/beta chains family. As to quaternary structure, F-type ATPases have 2 components, CF(1) - the catalytic core - and CF(0) - the membrane proton channel. CF(1) has five subunits: alpha(3), beta(3), gamma(1), delta(1), epsilon(1). CF(0) has four main subunits: a(1), b(1), b'(1) and c(9-12).

The protein localises to the cellular thylakoid membrane. The enzyme catalyses ATP + H2O + 4 H(+)(in) = ADP + phosphate + 5 H(+)(out). Its function is as follows. Produces ATP from ADP in the presence of a proton gradient across the membrane. The catalytic sites are hosted primarily by the beta subunits. This chain is ATP synthase subunit beta, found in Rippkaea orientalis (strain PCC 8801 / RF-1) (Cyanothece sp. (strain PCC 8801)).